Reading from the N-terminus, the 200-residue chain is Large ribosomal subunit protein uL4 (200 aa).

The segment at 43–71 (RAQKTRAEVSGSGKKPWRQKGTGRARSGD) is disordered.

The protein belongs to the universal ribosomal protein uL4 family. As to quaternary structure, part of the 50S ribosomal subunit.

In terms of biological role, one of the primary rRNA binding proteins, this protein initially binds near the 5'-end of the 23S rRNA. It is important during the early stages of 50S assembly. It makes multiple contacts with different domains of the 23S rRNA in the assembled 50S subunit and ribosome. Forms part of the polypeptide exit tunnel. This Actinobacillus pleuropneumoniae serotype 5b (strain L20) protein is Large ribosomal subunit protein uL4.